A 269-amino-acid chain; its full sequence is Meiotic drive suppressor wtf5 (269 aa).

The segment at 1–65 (MKNNYTSLKS…NTHRENHSYG (65 aa)) is disordered. Residues 19-30 (KTDHEIDLEKGP) are compositionally biased toward basic and acidic residues. 3 helical membrane-spanning segments follow: residues 73 to 95 (LLII…VCYL), 110 to 132 (WTLF…YFYE), and 206 to 228 (WGLK…VFIA).

The protein belongs to the WTF family. In terms of assembly, homomer. Interacts with other proteins that exhibit high sequence similarity.

The protein resides in the spore membrane. It localises to the vacuole membrane. In terms of biological role, acts as a suppressor component of the dual wtf meiotic drive system, and can suppress but not confer meiotic drive by compatible poisons. Wtf meiotic drive systems promote unequal transmission of alleles from the parental zygote to progeny spores by encoding a poison and an antidote from the same locus; the poison is trans-acting and forms toxic aggregates in all spores within an ascus, wherease the antidote is spore-specific and targets aggregates for degradation by the vacuole. Meiotic drive by wtf systems therefore lead to poisoning of all progeny that do not inherit the dual poison/antidote allele, or express a compatible antidote. This Schizosaccharomyces pombe (strain 972 / ATCC 24843) (Fission yeast) protein is Meiotic drive suppressor wtf5.